Reading from the N-terminus, the 325-residue chain is Hydroxymethylglutaryl-CoA lyase, mitochondrial (325 aa).

A mitochondrion-targeting transit peptide spans 1–27 (MATVRKAFPQRLVGLASLRAASTSSMG). The Pyruvate carboxyltransferase domain occupies 33–300 (VKIVEVGPRD…HTGVNLQKLL (268 aa)). Residue Arg-41 participates in substrate binding. An a divalent metal cation-binding site is contributed by Asp-42. Lys-48 bears the N6-acetyllysine; alternate mark. Residue Lys-48 is modified to N6-succinyllysine; alternate. The residue at position 111 (Lys-111) is an N6-acetyllysine. N6-acetyllysine; alternate is present on residues Lys-137 and Lys-179. 2 positions are modified to N6-succinyllysine; alternate: Lys-137 and Lys-179. Positions 233 and 235 each coordinate a divalent metal cation. Cys-266 is an active-site residue. An a divalent metal cation-binding site is contributed by Asn-275. Positions 323–325 (CKL) match the Microbody targeting signal motif. Lys-324 is modified (N6-acetyllysine).

It belongs to the HMG-CoA lyase family. Homodimer; disulfide-linked. Can also form homotetramers. In suckling rat, highest levels in liver and in intestine. Lower levels in heart, kidney and cerebellum. Weak expression in brain cortex, medulla and midbrain. Levels decrease slightly during weaning.

It is found in the mitochondrion matrix. Its subcellular location is the peroxisome. The enzyme catalyses (3S)-3-hydroxy-3-methylglutaryl-CoA = acetoacetate + acetyl-CoA. It participates in metabolic intermediate metabolism; (S)-3-hydroxy-3-methylglutaryl-CoA degradation; acetoacetate from (S)-3-hydroxy-3-methylglutaryl-CoA: step 1/1. In terms of biological role, mitochondrial 3-hydroxy-3-methylglutaryl-CoA lyase that catalyzes a cation-dependent cleavage of (S)-3-hydroxy-3-methylglutaryl-CoA into acetyl-CoA and acetoacetate, a key step in ketogenesis. Terminal step in leucine catabolism. Ketone bodies (beta-hydroxybutyrate, acetoacetate and acetone) are essential as an alternative source of energy to glucose, as lipid precursors and as regulators of metabolism. This Rattus norvegicus (Rat) protein is Hydroxymethylglutaryl-CoA lyase, mitochondrial (Hmgcl).